Consider the following 231-residue polypeptide: Large ribosomal subunit protein uL1 (231 aa).

It belongs to the universal ribosomal protein uL1 family. As to quaternary structure, part of the 50S ribosomal subunit.

Binds directly to 23S rRNA. The L1 stalk is quite mobile in the ribosome, and is involved in E site tRNA release. Functionally, protein L1 is also a translational repressor protein, it controls the translation of the L11 operon by binding to its mRNA. The chain is Large ribosomal subunit protein uL1 from Pseudomonas putida (strain ATCC 700007 / DSM 6899 / JCM 31910 / BCRC 17059 / LMG 24140 / F1).